The following is a 119-amino-acid chain: uncharacterized protein (119 aa).

4 consecutive transmembrane segments (helical) span residues Trp-3–Ser-23, Leu-29–Thr-49, Ala-58–Phe-78, and Val-87–Ala-107.

The protein belongs to the drug/metabolite transporter (DMT) superfamily. Small multidrug resistance (SMR) (TC 2.A.7.1) family.

Its subcellular location is the cell membrane. This is an uncharacterized protein from Bacillus subtilis (strain 168).